Reading from the N-terminus, the 1170-residue chain is WD repeat-containing protein 35 (1170 aa).

WD repeat units lie at residues 12–51, 69–108, 113–152, 154–193, and 491–528; these read PNNVKLKCISWNKDQGFIACGGEDGLLKVLRLETQTDDSK, GHSGAVQVVTWNEQYQKLTTSDQNGLIIVWMLYKGSWYEE, RNKSVVRSMSWNADGQKICIVYEDGAVIVGSVDGNRIWGK, LKGIQLCHVTWSADSKILLFGMANGEIHIYDNQGNFIMKM, and GTRDPICAITASDKTLIVGRESGVIQRYSFPNVALIQK.

In terms of assembly, component of the IFT complex A (IFT-A) complex. IFT-A complex is divided into a core subcomplex composed of IFT122:IFT140:WDR19 which is associated with TULP3 and a peripheral subcomplex composed of IFT43:WDR35:TTC21B. Interacts directy with IFT122, ITF43 and TTC21B. Interacts with IFT43. Interacts with CFAP61. As to expression, expressed at high levels in testis and at lower levels in the brain (at protein level). Also present in other tissues, including heart, uterus, spinal cord, ovary, liver, kidney, lung, pancreas and stomach.

The protein resides in the cytoplasm. It localises to the cytoskeleton. It is found in the microtubule organizing center. The protein localises to the centrosome. Its subcellular location is the cilium axoneme. The protein resides in the cilium basal body. As a component of the IFT complex A (IFT-A), a complex required for retrograde ciliary transport and entry into cilia of G protein-coupled receptors (GPCRs), it is involved in ciliogenesis and ciliary protein trafficking. May promote CASP3 activation and TNF-stimulated apoptosis. In Rattus norvegicus (Rat), this protein is WD repeat-containing protein 35 (Wdr35).